Consider the following 1023-residue polypeptide: MFHLRTCAAKLRPLTASQTVKTFSQNRPAAARTFGQIRCYTAPVAAEPFLSGTSSNYVEEMYYAWLENPKSVHKSWDIFFRNTNAGAPPGTAYQSPLPLSPGSLSAVARAGPLVEAQPNVDKLVEDHLAVQSLIRAYQIRGHHVAQLDPLGILDADLDSSVPADIISSTDKLGFYGLDESDLDKVFHLPTTTFIGGQESALPLREIIRRLEMAYCQHIGVEFMFINDLEQCQWIRQKFETPGVMQFTNEEKRTLLARLVRSTRFEEFLQRKWSSEKRFGLEGCEVLIPALKTIIDKSSENGVDYVIMGMPHRGRLNVLANVIRKELEQIFCQFDSKLEAADEGSGDVKYHLGMYHRRINRVTDRNITLSLVANPSHLEAADPVVMGKTKAEQFYCGDTEGKKVMSILLHGDAAFAGQGIVYETFHLSDLPSYTTHGTVHVVVNNQIGFTTDPRMARSSPYPTDVARVVNAPIFHVNSDDPEAVMYVCKVAAEWRSTFHKDVVVDLVCYRRNGHNEMDEPMFTQPLMYKQIRKQKPVLQKYAELLVSQGVVNQPEYEEEISKYDKICEEAFARSKDEKILHIKHWLDSPWPGFFTLDGQPRSMTCPSTGLTEDILTHIGNVASSVPVEDFTIHGGLSRILKTRGELVKNRTVDWALAEYMAFGSLLKEGIHIRLSGQDVERGTFSHRHHVLHDQNVDKRTCIPMNHLWPNQAPYTVCNSSLSEYGVLGFELGFAMASPNALVLWEAQFGDFHNTAQCIIDQFICPGQAKWVRQNGIVLLLPHGMEGMGPEHSSARPERFLQMCNDDPDVLPDLKEANFDINQLYDCNWVVVNCSTPGNFFHVLRRQILLPFRKPLIIFTPKSLLRHPEARSNFDEMLPGTHFQRVIPEDGPAAQNPGNVKRLLFCTGKVYYDLTRERKARDMVEQVAITRIEQLSPFPFDLLLQEVQKYPSAELAWCQEEHKNQGYYDYVKPRLRTTISRAKPVWYAGRDPAAAPATGNKKTHLTELQRLLDTAFDLDAFKNFS.

Residues 1 to 40 (MFHLRTCAAKLRPLTASQTVKTFSQNRPAAARTFGQIRCY) constitute a mitochondrion transit peptide. K74 carries the post-translational modification N6-succinyllysine. A Phosphoserine modification is found at S100. 3 residues coordinate Ca(2+): H143, D156, and D158. A thiamine diphosphate-binding site is contributed by R312. An N6-acetyllysine modification is found at K401. Thiamine diphosphate contacts are provided by D411, N444, and I446. 3 residues coordinate Mg(2+): D411, N444, and I446. K534 participates in a covalent cross-link: Glycyl lysine isopeptide (Lys-Gly) (interchain with G-Cter in ubiquitin). K564 is modified (N6-succinyllysine). Q676 serves as a coordination point for thiamine diphosphate. N6-acetyllysine is present on K970.

It belongs to the alpha-ketoglutarate dehydrogenase family. Homodimer. The 2-oxoglutarate dehydrogenase complex is composed of OGDH (2-oxoglutarate dehydrogenase; E1), DLST (dihydrolipoamide succinyltransferase; E2), DLD (dihydrolipoamide dehydrogenase; E3) and the assembly factor KGD4. It contains multiple copies of the three enzymatic components (E1, E2 and E3). In the nucleus, the 2-oxoglutarate dehydrogenase complex associates with KAT2A. Interacts with ABHD11; this interaction maintains the functional lipoylation of the 2-oxoglutarate dehydrogenase complex. It depends on thiamine diphosphate as a cofactor. Mg(2+) is required as a cofactor.

It localises to the mitochondrion. Its subcellular location is the nucleus. The catalysed reaction is N(6)-[(R)-lipoyl]-L-lysyl-[protein] + 2-oxoglutarate + H(+) = N(6)-[(R)-S(8)-succinyldihydrolipoyl]-L-lysyl-[protein] + CO2. With respect to regulation, calcium ions and ADP stimulate, whereas ATP and NADH reduce catalytic activity. In terms of biological role, 2-oxoglutarate dehydrogenase (E1o) component of the 2-oxoglutarate dehydrogenase complex (OGDHC). Participates in the first step, rate limiting for the overall conversion of 2-oxoglutarate to succinyl-CoA and CO(2) catalyzed by the whole OGDHC. Catalyzes the irreversible decarboxylation of 2-oxoglutarate (alpha-ketoglutarate) via the thiamine diphosphate (ThDP) cofactor and subsequent transfer of the decarboxylated acyl intermediate on an oxidized dihydrolipoyl group that is covalently amidated to the E2 enzyme (dihydrolipoyllysine-residue succinyltransferase or DLST). Plays a key role in the Krebs (citric acid) cycle, which is a common pathway for oxidation of fuel molecules, including carbohydrates, fatty acids, and amino acids. Can catalyze the decarboxylation of 2-oxoadipate in vitro, but at a much lower rate than 2-oxoglutarate. Mainly active in the mitochondrion. A fraction of the 2-oxoglutarate dehydrogenase complex also localizes in the nucleus and is required for lysine succinylation of histones: associates with KAT2A on chromatin and provides succinyl-CoA to histone succinyltransferase KAT2A. The protein is 2-oxoglutarate dehydrogenase complex component E1 of Bos taurus (Bovine).